A 1055-amino-acid chain; its full sequence is Endo-1,4-beta-xylanase A (1055 aa).

A signal peptide spans M1–A29. Residues A30–M357 are a. The 329-residue stretch at E360–P688 folds into the GH10 domain. E498 serves as the catalytic Proton donor. The active-site Nucleophile is E604. CBM-cenC domains are found at residues P720–Q851 and K895–N1040.

The protein belongs to the glycosyl hydrolase 10 (cellulase F) family.

It carries out the reaction Endohydrolysis of (1-&gt;4)-beta-D-xylosidic linkages in xylans.. This Thermotoga neapolitana protein is Endo-1,4-beta-xylanase A (xynA).